The following is a 33-amino-acid chain: Alpha-amanitin proprotein (33 aa).

A propeptide spanning residues 1-10 (MSDINATRLP) is cleaved from the precursor. The residue at position 11 (Ile-11) is a (3R,4R)-4,5-dihydroxyisoleucine; in form alpha-amanitin. Ile-11 bears the (3R,4S)-4-hydroxyisoleucine; in form gamma-amanitin mark. Residues 11-18 (IWGIGCNP) constitute a cross-link (cyclopeptide (Ile-Pro)). Positions 12–16 (WGIGC) form a cross-link, 2'-cysteinyl-6'-hydroxytryptophan sulfoxide (Trp-Cys). The residue at position 18 (Pro-18) is a 4-hydroxyproline. A propeptide spanning residues 19 to 33 (SVGDEVTALLASGEA) is cleaved from the precursor.

It belongs to the MSDIN fungal toxin family. Processed by the macrocyclase-peptidase enzyme POPB to yield a toxic cyclic decapeptide. POPB first removes 10 residues from the N-terminus. Conformational trapping of the remaining peptide forces the enzyme to release this intermediate rather than proceed to macrocyclization. The enzyme rebinds the remaining peptide in a different conformation and catalyzes macrocyclization of the N-terminal 8 residues.

Its function is as follows. Major toxin belonging to the bicyclic octapeptides amatoxins that acts by binding non-competitively to RNA polymerase II and greatly slowing the elongation of transcripts from target promoters. This chain is Alpha-amanitin proprotein, found in Amanita rimosa.